The chain runs to 319 residues: Putative peptide permease protein BOV_A0351 (319 aa).

6 helical membrane passes run 9-29, 102-122, 138-158, 182-202, 242-262, and 284-304; these read LLIG…LLQL, LLLM…TGII, LALL…LYVF, LLRH…ALIM, LPVV…AIFI, and YPVI…VNIL. Residues 98–305 enclose the ABC transmembrane type-1 domain; the sequence is IGPTLLLMAA…ACVIIVNILT (208 aa).

This sequence belongs to the binding-protein-dependent transport system permease family. As to quaternary structure, the complex is composed of two ATP-binding proteins (BOV_A0347 and BOV_A0348), two transmembrane proteins (BOV_A0350 and BOV_A0351) and a solute-binding protein (BOV_A0352).

It localises to the cell inner membrane. Functionally, probably part of an ABC transporter complex that could be involved in peptide import. Probably responsible for the translocation of the substrate across the membrane. The chain is Putative peptide permease protein BOV_A0351 from Brucella ovis (strain ATCC 25840 / 63/290 / NCTC 10512).